An 86-amino-acid polypeptide reads, in one-letter code: Colicin-E9 immunity protein (86 aa).

This sequence belongs to the colicins ColE2/ColE8/ColE9 and pyocins S1/S2 family.

Its function is as follows. This protein is able to protect a cell, which harbors the plasmid ColE9 encoding colicin E9, against colicin E9, it binds specifically to the DNase-type colicin and inhibits its bactericidal activity. The polypeptide is Colicin-E9 immunity protein (imm) (Escherichia coli).